The following is a 592-amino-acid chain: Alanine aminotransferase, mitochondrial (592 aa).

The transit peptide at 1–64 (MLSLSAKNHF…RKVRPVLQRH (64 aa)) directs the protein to the mitochondrion. At Ser77 the chain carries Phosphoserine. Pyridoxal 5'-phosphate-binding residues include Ala258, Ser259, Tyr284, Asn340, and Ser409. The residue at position 412 (Lys412) is an N6-(pyridoxal phosphate)lysine. Arg421 contacts pyridoxal 5'-phosphate.

Belongs to the class-I pyridoxal-phosphate-dependent aminotransferase family. Alanine aminotransferase subfamily. Homodimer. Requires pyridoxal 5'-phosphate as cofactor.

The protein localises to the mitochondrion matrix. It carries out the reaction L-alanine + 2-oxoglutarate = pyruvate + L-glutamate. It participates in amino-acid degradation; L-alanine degradation via transaminase pathway; pyruvate from L-alanine: step 1/1. Its function is as follows. Alanine aminotransferase involved in both alanine biosynthesis and utilization. Under respiratory conditions, constitutes the sole pathway for alanine biosynthesis and catabolism. Under fermentative conditions, it plays a catabolic role and alanine is mainly synthesized through an alternative pathway. The polypeptide is Alanine aminotransferase, mitochondrial (ALT1) (Saccharomyces cerevisiae (strain ATCC 204508 / S288c) (Baker's yeast)).